The following is a 375-amino-acid chain: Erythronate-4-phosphate dehydrogenase (375 aa).

Positions 45 and 66 each coordinate substrate. Residues D146 and T175 each contribute to the NAD(+) site. R208 is an active-site residue. Residue D232 participates in NAD(+) binding. The active site involves E237. H254 serves as the catalytic Proton donor. Position 257 (G257) interacts with NAD(+). Y258 is a binding site for substrate.

Belongs to the D-isomer specific 2-hydroxyacid dehydrogenase family. PdxB subfamily. Homodimer.

It is found in the cytoplasm. It carries out the reaction 4-phospho-D-erythronate + NAD(+) = (R)-3-hydroxy-2-oxo-4-phosphooxybutanoate + NADH + H(+). Its pathway is cofactor biosynthesis; pyridoxine 5'-phosphate biosynthesis; pyridoxine 5'-phosphate from D-erythrose 4-phosphate: step 2/5. Its function is as follows. Catalyzes the oxidation of erythronate-4-phosphate to 3-hydroxy-2-oxo-4-phosphonooxybutanoate. The protein is Erythronate-4-phosphate dehydrogenase of Yersinia enterocolitica serotype O:8 / biotype 1B (strain NCTC 13174 / 8081).